The following is a 135-amino-acid chain: Large ribosomal subunit protein eL32 (135 aa).

The protein belongs to the eukaryotic ribosomal protein eL32 family.

The protein is Large ribosomal subunit protein eL32 of Methanococcus maripaludis (strain C5 / ATCC BAA-1333).